The sequence spans 336 residues: Fructose-1,6-bisphosphatase class 1 (336 aa).

Glu92, Asp115, Leu117, and Asp118 together coordinate Mg(2+). Residues 118 to 121, Asn211, Tyr244, 262 to 264, and Lys274 contribute to the substrate site; these read DGSS and YLY. Glu280 is a binding site for Mg(2+).

This sequence belongs to the FBPase class 1 family. As to quaternary structure, homotetramer. It depends on Mg(2+) as a cofactor.

The protein localises to the cytoplasm. It carries out the reaction beta-D-fructose 1,6-bisphosphate + H2O = beta-D-fructose 6-phosphate + phosphate. The protein operates within carbohydrate biosynthesis; gluconeogenesis. In Aliivibrio fischeri (strain MJ11) (Vibrio fischeri), this protein is Fructose-1,6-bisphosphatase class 1.